Consider the following 196-residue polypeptide: ATP-dependent Clp protease proteolytic subunit (196 aa).

Catalysis depends on Ser101, which acts as the Nucleophile. His126 is an active-site residue.

This sequence belongs to the peptidase S14 family. As to quaternary structure, component of the chloroplastic Clp protease core complex.

It is found in the plastid. The protein resides in the chloroplast stroma. It catalyses the reaction Hydrolysis of proteins to small peptides in the presence of ATP and magnesium. alpha-casein is the usual test substrate. In the absence of ATP, only oligopeptides shorter than five residues are hydrolyzed (such as succinyl-Leu-Tyr-|-NHMec, and Leu-Tyr-Leu-|-Tyr-Trp, in which cleavage of the -Tyr-|-Leu- and -Tyr-|-Trp bonds also occurs).. In terms of biological role, cleaves peptides in various proteins in a process that requires ATP hydrolysis. Has a chymotrypsin-like activity. Plays a major role in the degradation of misfolded proteins. The sequence is that of ATP-dependent Clp protease proteolytic subunit from Lobularia maritima (Sweet alyssum).